A 592-amino-acid polypeptide reads, in one-letter code: Calnexin (592 aa).

The signal sequence occupies residues Met1–Ala20. The Lumenal segment spans residues His21–Pro481. The Ca(2+) site is built by Ser74 and Asp117. At Lys137 the chain carries N6-acetyllysine. A disulfide bridge connects residues Cys160 and Cys194. Residues Tyr164, Lys166, Tyr185, and Asp192 each contribute to the an alpha-D-glucoside site. Positions Gly260–Asp345 are disordered. The segment covering Arg274–Lys319 has biased composition (basic and acidic residues). The interval Ile276–Glu409 is p domain (Extended arm). Repeat copies occupy residues Asp278 to Arg290, Asp295 to Asp307, Asp314 to Asp326, Asp333 to Asp345, and Gly348 to Pro358. 4 X approximate repeats regions lie at residues Asp278–Asp345 and Gly348–Pro405. Residues Trp323 to Asp345 are compositionally biased toward acidic residues. The interaction with PPIB stretch occupies residues Asp326 to Arg359. Cys360 and Cys366 are disulfide-bonded. Tandem repeats lie at residues Gly367–Pro377, Gly381–Pro391, and Gly395–Pro405. Position 425 (Glu425) interacts with an alpha-D-glucoside. Ca(2+) is bound at residue Asp436. The chain crosses the membrane as a helical span at residues Trp482–Cys502. S-palmitoyl cysteine attachment occurs at residues Cys502 and Cys503. Topologically, residues Cys503–Glu592 are cytoplasmic. A sufficient to mediate interaction with SGIP1 region spans residues Cys503–Glu592. Residues Gly511–Glu592 are disordered. Residues Lys525–Lys547 show a composition bias toward acidic residues. The residue at position 554 (Ser554) is a Phosphoserine. Thr562 is modified (phosphothreonine). A Phosphoserine; by MAPK3 modification is found at Ser564. Ser583 carries the post-translational modification Phosphoserine.

The protein belongs to the calreticulin family. As to quaternary structure, interacts with MAPK3/ERK1. Interacts with KCNH2. Associates with ribosomes. Interacts with SGIP1; involved in negative regulation of endocytosis. The palmitoylated form interacts with the ribosome-translocon complex component SSR1, promoting efficient folding of glycoproteins. Interacts with SERPINA2P/SERPINA2 and with the S and Z variants of SERPINA1. Interacts with PPIB. Interacts with ZNRF4. Interacts with SMIM22. Interacts with TMX2. Interacts with TMEM35A/NACHO. Interacts with CHRNA7. Interacts with reticulophagy regulators RETREG2 and RETREG3. Interacts with DNM1L; may form part of a larger protein complex at the ER-mitochondrial interface during mitochondrial fission. Interacts with ADAM7. (Microbial infection) Interacts with HBV large envelope protein, isoform L. In terms of assembly, (Microbial infection) Interacts with HBV large envelope protein, isoform M; this association may be essential for isoform M proper secretion. In terms of processing, phosphorylated at Ser-564 by MAPK3/ERK1. Phosphorylation by MAPK3/ERK1 increases its association with ribosomes. Palmitoylation by DHHC6 leads to the preferential localization to the perinuclear rough ER. It mediates the association of calnexin with the ribosome-translocon complex (RTC) which is required for efficient folding of glycosylated proteins. Post-translationally, ubiquitinated, leading to proteasomal degradation. Probably ubiquitinated by ZNRF4.

The protein localises to the endoplasmic reticulum membrane. The protein resides in the mitochondrion membrane. It localises to the melanosome membrane. Calcium-binding protein that interacts with newly synthesized monoglucosylated glycoproteins in the endoplasmic reticulum. It may act in assisting protein assembly and/or in the retention within the ER of unassembled protein subunits. It seems to play a major role in the quality control apparatus of the ER by the retention of incorrectly folded proteins. Associated with partial T-cell antigen receptor complexes that escape the ER of immature thymocytes, it may function as a signaling complex regulating thymocyte maturation. Additionally it may play a role in receptor-mediated endocytosis at the synapse. The protein is Calnexin (CANX) of Homo sapiens (Human).